The primary structure comprises 303 residues: Putative CRISPR-associated endonuclease Cas1 2 (303 aa).

Position 149 (Glu-149) interacts with Mn(2+).

This sequence belongs to the CRISPR-associated endonuclease Cas1 family. As to quaternary structure, homodimer, forms a heterotetramer with a Cas2 homodimer. Requires Mg(2+) as cofactor. The cofactor is Mn(2+).

Its function is as follows. CRISPR (clustered regularly interspaced short palindromic repeat), is an adaptive immune system that provides protection against mobile genetic elements (viruses, transposable elements and conjugative plasmids). CRISPR clusters contain sequences complementary to antecedent mobile elements and target invading nucleic acids. CRISPR clusters are transcribed and processed into CRISPR RNA (crRNA). Acts as a dsDNA endonuclease. Involved in the integration of spacer DNA into the CRISPR cassette. This chain is Putative CRISPR-associated endonuclease Cas1 2, found in Methanospirillum hungatei JF-1 (strain ATCC 27890 / DSM 864 / NBRC 100397 / JF-1).